The chain runs to 271 residues: Formamidopyrimidine-DNA glycosylase (271 aa).

Pro2 (schiff-base intermediate with DNA) is an active-site residue. Catalysis depends on Glu3, which acts as the Proton donor. Catalysis depends on Lys58, which acts as the Proton donor; for beta-elimination activity. 3 residues coordinate DNA: His91, Arg110, and Arg152. The FPG-type zinc-finger motif lies at 237–271 (SVYGRNDAPCPGCGAPIRRSRQGGRSTYFCDRCQH). The active-site Proton donor; for delta-elimination activity is the Arg261.

Belongs to the FPG family. In terms of assembly, monomer. Zn(2+) serves as cofactor.

The enzyme catalyses Hydrolysis of DNA containing ring-opened 7-methylguanine residues, releasing 2,6-diamino-4-hydroxy-5-(N-methyl)formamidopyrimidine.. The catalysed reaction is 2'-deoxyribonucleotide-(2'-deoxyribose 5'-phosphate)-2'-deoxyribonucleotide-DNA = a 3'-end 2'-deoxyribonucleotide-(2,3-dehydro-2,3-deoxyribose 5'-phosphate)-DNA + a 5'-end 5'-phospho-2'-deoxyribonucleoside-DNA + H(+). Functionally, involved in base excision repair of DNA damaged by oxidation or by mutagenic agents. Acts as a DNA glycosylase that recognizes and removes damaged bases. Has a preference for oxidized purines, such as 7,8-dihydro-8-oxoguanine (8-oxoG). Has AP (apurinic/apyrimidinic) lyase activity and introduces nicks in the DNA strand. Cleaves the DNA backbone by beta-delta elimination to generate a single-strand break at the site of the removed base with both 3'- and 5'-phosphates. The protein is Formamidopyrimidine-DNA glycosylase of Geotalea uraniireducens (strain Rf4) (Geobacter uraniireducens).